Consider the following 175-residue polypeptide: GTP-dependent dephospho-CoA kinase (175 aa).

Asp-48, Val-49, Val-50, Asp-66, and Glu-124 together coordinate GTP.

It belongs to the GTP-dependent DPCK family.

The enzyme catalyses 3'-dephospho-CoA + GTP = GDP + CoA + H(+). It functions in the pathway cofactor biosynthesis; coenzyme A biosynthesis. Functionally, catalyzes the GTP-dependent phosphorylation of the 3'-hydroxyl group of dephosphocoenzyme A to form coenzyme A (CoA). In Thermofilum pendens (strain DSM 2475 / Hrk 5), this protein is GTP-dependent dephospho-CoA kinase.